The sequence spans 268 residues: Interleukin-1 beta (268 aa).

The propeptide occupies 1–115; it reads MAAVPDTSDM…DNWDEGYVCD (115 aa).

This sequence belongs to the IL-1 family. In terms of assembly, monomer. In its precursor form, weakly interacts with full-length MEFV; the mature cytokine does not interact at all. Interacts with integrins ITGAV:ITGBV and ITGA5:ITGB1; integrin-binding is required for IL1B signaling. Interacts with cargo receptor TMED10; the interaction is direct and is required for the secretion of IL1B mature form. Interacts with HSP90AB1; the interaction facilitates cargo translocation into the ERGIC. Interacts with HSP90B1; the interaction facilitates cargo translocation into the ERGIC.

The protein resides in the cytoplasm. It is found in the cytosol. It localises to the secreted. The protein localises to the lysosome. Its subcellular location is the extracellular exosome. Its function is as follows. Potent pro-inflammatory cytokine. Initially discovered as the major endogenous pyrogen, induces prostaglandin synthesis, neutrophil influx and activation, T-cell activation and cytokine production, B-cell activation and antibody production, and fibroblast proliferation and collagen production. Promotes Th17 differentiation of T-cells. Synergizes with IL12/interleukin-12 to induce IFNG synthesis from T-helper 1 (Th1) cells. Plays a role in angiogenesis by inducing VEGF production synergistically with TNF and IL6. Involved in transduction of inflammation downstream of pyroptosis: its mature form is specifically released in the extracellular milieu by passing through the gasdermin-D (GSDMD) pore. The protein is Interleukin-1 beta (IL1B) of Equus caballus (Horse).